A 133-amino-acid polypeptide reads, in one-letter code: Large ribosomal subunit protein uL16c (133 aa).

The protein belongs to the universal ribosomal protein uL16 family. In terms of assembly, part of the 50S ribosomal subunit.

The protein localises to the plastid. It is found in the chloroplast. In Liriodendron tulipifera (Tuliptree), this protein is Large ribosomal subunit protein uL16c.